Reading from the N-terminus, the 49-residue chain is Small, acid-soluble spore protein O (49 aa).

The interval 24–49 is disordered; sequence GYNEEFSNEPLTEAQRQNNKKRKKNQ.

It belongs to the SspO family.

The protein localises to the spore core. The sequence is that of Small, acid-soluble spore protein O from Geobacillus kaustophilus (strain HTA426).